A 175-amino-acid chain; its full sequence is GTP-dependent dephospho-CoA kinase (175 aa).

5 residues coordinate GTP: aspartate 48, valine 49, valine 50, aspartate 66, and glutamate 124.

It belongs to the GTP-dependent DPCK family.

The catalysed reaction is 3'-dephospho-CoA + GTP = GDP + CoA + H(+). The protein operates within cofactor biosynthesis; coenzyme A biosynthesis. Catalyzes the GTP-dependent phosphorylation of the 3'-hydroxyl group of dephosphocoenzyme A to form coenzyme A (CoA). This is GTP-dependent dephospho-CoA kinase from Thermofilum pendens (strain DSM 2475 / Hrk 5).